The chain runs to 455 residues: Protein YmfN (455 aa).

It belongs to the phage terminase family.

The protein is Protein YmfN (ymfN) of Escherichia coli (strain K12).